The chain runs to 949 residues: L-fucokinase/L-fucose-1-P guanylyltransferase (949 aa).

The segment at 25–191 (DWFCTSDPVG…DFMLQKPSLA (167 aa)) is fucose-1-phosphate guanylyltransferase. The tract at residues 559-949 (LLRDGLLDGI…SDKGFQVSRS (391 aa)) is L-fucokinase.

The protein belongs to the GHMP kinase family. Homotetramer. It depends on Mn(2+) as a cofactor. Mg(2+) serves as cofactor.

The catalysed reaction is L-fucose + ATP = beta-L-fucose 1-phosphate + ADP + H(+). The enzyme catalyses beta-L-fucose 1-phosphate + GTP + H(+) = GDP-beta-L-fucose + diphosphate. Functionally, bifunctional enzyme involved in the salvage pathway of GDP-fucose synthesis. Catalyzes two successive reactions, the ATP-dependent phosphorylation of L-fucose to L-fucose 1-phosphate, and its guanylylation to GDP-L-fucose. GDP-fucose is an important fucose donor in the process of fucosylated oligosaccharides formation. The protein is L-fucokinase/L-fucose-1-P guanylyltransferase of Bacteroides fragilis.